Here is a 245-residue protein sequence, read N- to C-terminus: E3 ubiquitin-protein ligase RNF138 (245 aa).

N-acetylalanine is present on Ala-2. The RING-type zinc finger occupies 18–58 (CPVCQEVLKTPVRTAACQHVFCRKCFLTAMRESGIHCPLCR). Zn(2+) is bound by residues Cys-86, Cys-89, His-101, and Cys-105. The C2HC RNF-type zinc finger occupies 86–105 (CRCCAKQIKFYRMRHHYKSC). Positions 128–153 (VGNSNRSETSASDNIETYQENTGSSG) are disordered. C2H2-type zinc fingers lie at residues 157–180 (FKCP…NSNH) and 187–215 (VTCP…NQRH). A UIM domain is found at 225–243 (LQLDEETQYQTAVEESFQV).

Interacts with NLK. Interacts with XRCC5/Ku80. Interacts with RBBP8/CtIP. In terms of processing, auto-ubiquitinated.

It is found in the chromosome. The catalysed reaction is S-ubiquitinyl-[E2 ubiquitin-conjugating enzyme]-L-cysteine + [acceptor protein]-L-lysine = [E2 ubiquitin-conjugating enzyme]-L-cysteine + N(6)-ubiquitinyl-[acceptor protein]-L-lysine.. It functions in the pathway protein modification; protein ubiquitination. Functionally, E3 ubiquitin-protein ligase involved in DNA damage response by promoting DNA resection and homologous recombination. Recruited to sites of double-strand breaks following DNA damage and specifically promotes double-strand break repair via homologous recombination. Two different, non-exclusive, mechanisms have been proposed. According to a report, regulates the choice of double-strand break repair by favoring homologous recombination over non-homologous end joining (NHEJ): acts by mediating ubiquitination of XRCC5/Ku80, leading to remove the Ku complex from DNA breaks, thereby promoting homologous recombination. According to another report, cooperates with UBE2Ds E2 ubiquitin ligases (UBE2D1, UBE2D2, UBE2D3 or UBE2D4) to promote homologous recombination by mediating ubiquitination of RBBP8/CtIP. Together with NLK, involved in the ubiquitination and degradation of TCF/LEF. Also exhibits auto-ubiquitination activity in combination with UBE2K. May act as a negative regulator in the Wnt/beta-catenin-mediated signaling pathway. This chain is E3 ubiquitin-protein ligase RNF138 (RNF138), found in Bos taurus (Bovine).